We begin with the raw amino-acid sequence, 525 residues long: WD repeat-containing protein JIP5 (525 aa).

WD repeat units follow at residues 28-69 (VFDE…RILN), 121-160 (RHKG…VMKK), 211-251 (HNGD…ESDA), 270-310 (QEDE…LVDQ), and 358-398 (RKHS…DDEE). The interval 396–525 (DEEGKINESY…EHGIRKFEGL (130 aa)) is disordered. Over residues 410 to 424 (SDNDNGFDSDADSNS) the composition is skewed to acidic residues. A compositionally biased stretch (low complexity) spans 425-435 (DSESVSSSDVD). Over residues 463–484 (SKDELLAELEKDLQSSDEDSKH) the composition is skewed to basic and acidic residues. Residues 485-501 (YTKRTKSTQPKKLKKQK) show a composition bias toward basic residues. Over residues 513-525 (QKHEHGIRKFEGL) the composition is skewed to basic and acidic residues.

Belongs to the WD repeat WDR55 family.

The protein resides in the nucleus. The protein localises to the nucleolus. The sequence is that of WD repeat-containing protein JIP5 (JIP5) from Kluyveromyces lactis (strain ATCC 8585 / CBS 2359 / DSM 70799 / NBRC 1267 / NRRL Y-1140 / WM37) (Yeast).